The primary structure comprises 362 residues: Peptide chain release factor 1 (362 aa).

Gln237 carries the post-translational modification N5-methylglutamine.

It belongs to the prokaryotic/mitochondrial release factor family. Post-translationally, methylated by PrmC. Methylation increases the termination efficiency of RF1.

The protein localises to the cytoplasm. In terms of biological role, peptide chain release factor 1 directs the termination of translation in response to the peptide chain termination codons UAG and UAA. The polypeptide is Peptide chain release factor 1 (Vibrio atlanticus (strain LGP32) (Vibrio splendidus (strain Mel32))).